The chain runs to 844 residues: Striatin-interacting proteins 2 (844 aa).

Residues 1 to 18 (MDDPAAPGPAGSPANDNG) are compositionally biased toward low complexity. The tract at residues 1–58 (MDDPAAPGPAGSPANDNGNGNGNGNGNGNGGKGKPAVPKGRETFRNQRRESEGSVDCP) is disordered. A compositionally biased stretch (gly residues) spans 19–33 (NGNGNGNGNGNGGKG). Over residues 39–52 (KGRETFRNQRRESE) the composition is skewed to basic and acidic residues. Phosphoserine occurs at positions 328, 339, and 364. Residues 331 to 355 (SYTLDLGESQLAPPPSKLRGRRGSR) are disordered. The interval 370 to 422 (ERDLFKTEEPATEEEEESAADGERTLDGELDLLEQDPLVPPPPSQTPLSTDRV) is disordered. Over residues 379 to 389 (PATEEEEESAA) the composition is skewed to acidic residues.

This sequence belongs to the STRIP family. In terms of assembly, part of the core of STRIPAK complexes composed of PP2A catalytic and scaffolding subunits, the striatins (PP2A regulatory subunits), the striatin-associated proteins MOB4, STRIP1 and STRIP2, PDCD10 and members of the STE20 kinases, such as STK24 and STK26. Interacts with CTTNBP2NL.

The protein localises to the cytoplasm. In terms of biological role, plays a role in the regulation of cell morphology and cytoskeletal organization. Required in the control of cell shape. Calmodulin-binding scaffolding protein which is the center of the striatin-interacting phosphatase and kinase (STRIPAK) complexes. STRIPAK complexes have critical roles in protein (de)phosphorylation and are regulators of multiple signaling pathways including Hippo, MAPK, nuclear receptor and cytoskeleton remodeling. Different types of STRIPAK complexes are involved in a variety of biological processes such as cell growth, differentiation, apoptosis, metabolism and immune regulation. The protein is Striatin-interacting proteins 2 (Strip2) of Mus musculus (Mouse).